The following is a 185-amino-acid chain: Inner membrane-spanning protein YciB (185 aa).

The next 5 helical transmembrane spans lie at 19–39 (LGGV…QIVI), 53–73 (IMAS…EIRY), 76–96 (WKVT…QFQF), 118–138 (TLNF…IYIS), and 149–169 (FKSF…GVYI).

The protein belongs to the YciB family.

Its subcellular location is the cell inner membrane. Functionally, plays a role in cell envelope biogenesis, maintenance of cell envelope integrity and membrane homeostasis. This chain is Inner membrane-spanning protein YciB, found in Haemophilus influenzae (strain PittEE).